A 114-amino-acid polypeptide reads, in one-letter code: MVDLMTVIMVRYSLFLTWELVLLQLLLLRLSFHVSRTKILVLVRISIILHHDENAYTQSQYNLYTGPLTLRFLQRVYYMHFHIYIFNAIPLRYVKKNDPMSGPSYEMRYNKNER.

This is an uncharacterized protein from Saccharomyces cerevisiae (strain ATCC 204508 / S288c) (Baker's yeast).